The sequence spans 638 residues: Signal recognition particle receptor subunit alpha (638 aa).

Disordered stretches follow at residues 129–205 (KIRA…VELS), 218–245 (IQKH…KKAP), and 262–315 (SAPT…ATKG). Composition is skewed to basic and acidic residues over residues 137 to 146 (KKFEDSEKAK) and 153 to 165 (IETR…EKAK). The residue at position 177 (serine 177) is a Phosphoserine. Over residues 218–239 (IQKHGRGLEKSSKSTKSDAPKE) the composition is skewed to basic and acidic residues. A Phosphothreonine modification is found at threonine 284. Serine 296, serine 297, and serine 298 each carry phosphoserine. Over residues 304 to 314 (AQNASKPSATK) the composition is skewed to polar residues. The segment at 419–636 (YVVTFCGVNG…NAKAVVAALM (218 aa)) is NG domain. Position 425–432 (425–432 (GVNGVGKS)) interacts with GTP. Serine 473 carries the phosphoserine modification. Position 520–524 (520–524 (DTAGR)) interacts with GTP. Phosphothreonine is present on threonine 578. Position 588–591 (588–591 (TKFD)) interacts with GTP.

It belongs to the GTP-binding SRP family. As to quaternary structure, heterodimer with SRPRB. Interacts with the signal recognition particle (SRP) complex subunit SRP54.

Its subcellular location is the endoplasmic reticulum membrane. In terms of biological role, component of the SRP (signal recognition particle) receptor. Ensures, in conjunction with the signal recognition particle, the correct targeting of the nascent secretory proteins to the endoplasmic reticulum membrane system. Forms a guanosine 5'-triphosphate (GTP)-dependent complex with the SRP subunit SRP54. SRP receptor compaction and GTPase rearrangement drive SRP-mediated cotranslational protein translocation into the ER. This Canis lupus familiaris (Dog) protein is Signal recognition particle receptor subunit alpha.